The chain runs to 205 residues: MPGLLGKKIGMTSVFSAEGKNLPCTVIEVGPCVVTQVKTLEKDGYSALQLGFVDAKEKHTTKPLAGHFKKANVAPKRHLAEFKNFEGEHKLGDVLNVEFFSDADFVDVVGTSKGKGFQGVVKRHGFGGVGQATHGQHNRLRAPGAVGACSYPAKVFKGTRMAGQMGNERVTVQNLEVIKVMPEHNLLLVKGSVPGAKGSILLIEK.

It belongs to the universal ribosomal protein uL3 family. As to quaternary structure, part of the 50S ribosomal subunit. Forms a cluster with proteins L14 and L19.

One of the primary rRNA binding proteins, it binds directly near the 3'-end of the 23S rRNA, where it nucleates assembly of the 50S subunit. The chain is Large ribosomal subunit protein uL3 from Porphyromonas gingivalis (strain ATCC 33277 / DSM 20709 / CIP 103683 / JCM 12257 / NCTC 11834 / 2561).